Reading from the N-terminus, the 362-residue chain is Glutamate 5-kinase (362 aa).

Position 3 (Lys-3) interacts with ATP. The substrate site is built by Ser-43, Asp-128, and Asn-140. ATP-binding positions include 160–161 and 202–208; these read TD and TGGMRTK. Residues 267-348 form the PUA domain; sequence AGAILIDDGA…REIENVLGYS (82 aa).

This sequence belongs to the glutamate 5-kinase family.

Its subcellular location is the cytoplasm. It carries out the reaction L-glutamate + ATP = L-glutamyl 5-phosphate + ADP. It functions in the pathway amino-acid biosynthesis; L-proline biosynthesis; L-glutamate 5-semialdehyde from L-glutamate: step 1/2. Catalyzes the transfer of a phosphate group to glutamate to form L-glutamate 5-phosphate. This chain is Glutamate 5-kinase, found in Xanthomonas euvesicatoria pv. vesicatoria (strain 85-10) (Xanthomonas campestris pv. vesicatoria).